The primary structure comprises 141 residues: Large ribosomal subunit protein uL11 (141 aa).

Belongs to the universal ribosomal protein uL11 family. As to quaternary structure, part of the ribosomal stalk of the 50S ribosomal subunit. Interacts with L10 and the large rRNA to form the base of the stalk. L10 forms an elongated spine to which L12 dimers bind in a sequential fashion forming a multimeric L10(L12)X complex. In terms of processing, one or more lysine residues are methylated.

In terms of biological role, forms part of the ribosomal stalk which helps the ribosome interact with GTP-bound translation factors. The sequence is that of Large ribosomal subunit protein uL11 from Oceanobacillus iheyensis (strain DSM 14371 / CIP 107618 / JCM 11309 / KCTC 3954 / HTE831).